A 934-amino-acid chain; its full sequence is uncharacterized protein (934 aa).

Residues 1–24 (MKLKKRYLLLGSTLTVSAALILSA) form the signal peptide. Cys-25 carries the N-palmitoyl cysteine lipid modification. Cys-25 carries the S-diacylglycerol cysteine lipid modification. The segment at 111-131 (SGLKGRAQKNGSTDSSDGSSK) is disordered. The segment covering 119-131 (KNGSTDSSDGSSK) has biased composition (polar residues).

It localises to the cell membrane. This is an uncharacterized protein from Mycoplasma genitalium (strain ATCC 33530 / DSM 19775 / NCTC 10195 / G37) (Mycoplasmoides genitalium).